We begin with the raw amino-acid sequence, 396 residues long: Lipid-A-disaccharide synthase (396 aa).

It belongs to the LpxB family.

It carries out the reaction a lipid X + a UDP-2-N,3-O-bis[(3R)-3-hydroxyacyl]-alpha-D-glucosamine = a lipid A disaccharide + UDP + H(+). It functions in the pathway bacterial outer membrane biogenesis; LPS lipid A biosynthesis. Condensation of UDP-2,3-diacylglucosamine and 2,3-diacylglucosamine-1-phosphate to form lipid A disaccharide, a precursor of lipid A, a phosphorylated glycolipid that anchors the lipopolysaccharide to the outer membrane of the cell. This is Lipid-A-disaccharide synthase from Acinetobacter baylyi (strain ATCC 33305 / BD413 / ADP1).